Consider the following 269-residue polypeptide: Probable ribosomal RNA small subunit methyltransferase A (269 aa).

Positions 23, 25, 50, 71, 95, and 110 each coordinate S-adenosyl-L-methionine.

This sequence belongs to the class I-like SAM-binding methyltransferase superfamily. rRNA adenine N(6)-methyltransferase family. RsmA subfamily.

Its subcellular location is the cytoplasm. Functionally, specifically dimethylates two adjacent adenosines in the loop of a conserved hairpin near the 3'-end of 16S rRNA in the 30S particle. May play a critical role in biogenesis of 30S subunits. This is Probable ribosomal RNA small subunit methyltransferase A from Pyrococcus abyssi (strain GE5 / Orsay).